Reading from the N-terminus, the 356-residue chain is Ferredoxin--NADP reductase (356 aa).

Threonine 25, glutamate 44, glutamine 52, tyrosine 57, valine 97, phenylalanine 132, aspartate 298, and serine 339 together coordinate FAD.

It belongs to the ferredoxin--NADP reductase type 2 family. Homodimer. FAD serves as cofactor.

The catalysed reaction is 2 reduced [2Fe-2S]-[ferredoxin] + NADP(+) + H(+) = 2 oxidized [2Fe-2S]-[ferredoxin] + NADPH. This Chlorobaculum parvum (strain DSM 263 / NCIMB 8327) (Chlorobium vibrioforme subsp. thiosulfatophilum) protein is Ferredoxin--NADP reductase.